The primary structure comprises 168 residues: I-Kappa-B like protein G2 (168 aa).

ANK repeat units lie at residues 56–88 (SQRQ…DING) and 93–123 (GGNT…NKTA).

It belongs to the polydnaviridae I-Kappa-B-like protein family.

Suppresses the host immune response through NF-kappa-B inactivation. Possesses ankyrin repeat domains required for NF-kappa-B binding but lacks the regulatory regions required for dissociation from NF-kappa-B and degradation. Therefore, prevents host NF-kappa-B release and subsequent activation. The sequence is that of I-Kappa-B like protein G2 (G4) from Microplitis demolitor (Parasitoid wasp).